The primary structure comprises 316 residues: tRNA dimethylallyltransferase (316 aa).

Residue 17–24 (GPTASGKT) participates in ATP binding. 19–24 (TASGKT) provides a ligand contact to substrate. Interaction with substrate tRNA stretches follow at residues 42-45 (DSAL), 166-170 (QRLSR), and 247-252 (RCVGYR).

It belongs to the IPP transferase family. As to quaternary structure, monomer. Mg(2+) is required as a cofactor.

It carries out the reaction adenosine(37) in tRNA + dimethylallyl diphosphate = N(6)-dimethylallyladenosine(37) in tRNA + diphosphate. Its function is as follows. Catalyzes the transfer of a dimethylallyl group onto the adenine at position 37 in tRNAs that read codons beginning with uridine, leading to the formation of N6-(dimethylallyl)adenosine (i(6)A). This chain is tRNA dimethylallyltransferase, found in Salmonella schwarzengrund (strain CVM19633).